The sequence spans 290 residues: ATP synthase gamma chain (290 aa).

It belongs to the ATPase gamma chain family. As to quaternary structure, F-type ATPases have 2 components, CF(1) - the catalytic core - and CF(0) - the membrane proton channel. CF(1) has five subunits: alpha(3), beta(3), gamma(1), delta(1), epsilon(1). CF(0) has three main subunits: a, b and c.

The protein resides in the cell inner membrane. Produces ATP from ADP in the presence of a proton gradient across the membrane. The gamma chain is believed to be important in regulating ATPase activity and the flow of protons through the CF(0) complex. The protein is ATP synthase gamma chain of Bacteroides fragilis (strain YCH46).